We begin with the raw amino-acid sequence, 305 residues long: tRNA uridine(34) hydroxylase (305 aa).

Residues 126–220 form the Rhodanese domain; the sequence is CDPEVTVIDT…YLEEVPAQES (95 aa). Cysteine 180 serves as the catalytic Cysteine persulfide intermediate.

This sequence belongs to the TrhO family.

It carries out the reaction uridine(34) in tRNA + AH2 + O2 = 5-hydroxyuridine(34) in tRNA + A + H2O. In terms of biological role, catalyzes oxygen-dependent 5-hydroxyuridine (ho5U) modification at position 34 in tRNAs. The protein is tRNA uridine(34) hydroxylase of Nostoc punctiforme (strain ATCC 29133 / PCC 73102).